A 585-amino-acid polypeptide reads, in one-letter code: MPTQEVKKHAVLPPIISRNDKEFLESMQRYIITETKRVGCNEEGPPDEYYTIYRNVFDKVIDYVNAYKSVLTSIKKEYDAFIETVKKGRRNAFYLHGKLKVLAAEPTALVYHQRRTIQLEAKMRIIDNNSKAIQLQIDQMKQLRMEYENTEVKLCASSKQLWKPIPGMTLQDSVNLDALNNHKQNLEDKCRKLKQDMSTMYVSAQKKADLDEEMIVLLKRRDIAENLNKDLRFRHQRLQVISHTLNSWMKQNMRIPFKDVLERIQQTKAIYGHAKVVDELFEDDPNKTKEAIVMLYYIERFHELISLGEYEKAACFAANSPKRILQNAGTMNKFKAIGKVRGKPLPLLLFFEAIFNTSQAFKRAINVDLTLEGIKCGLSEERLDLVTHWVTQAKLTFSEKVGDAICAYGEQHPYHKSKCLALAQIVYNECGLHKKAILCLCRQGQFHEAMEHIQQSKDINTDDLIQLITACPQIDLIRGLTEERNGKPPFLSFGLTVLHLFSVDMKKIGMKLLQEVSKAEKDVIEHLVMSDLFCSIEKWQELANICLQNGFKNLSNDIMSILRSQAGVSEISEDDTTNVMEHVFW.

Residues Gln-118 to Gln-239 adopt a coiled-coil conformation.

This chain is Clathrin heavy chain linker domain-containing protein 1 (Clhc1), found in Rattus norvegicus (Rat).